The primary structure comprises 198 residues: Probable chemoreceptor glutamine deamidase CheD (198 aa).

The protein belongs to the CheD family.

The enzyme catalyses L-glutaminyl-[protein] + H2O = L-glutamyl-[protein] + NH4(+). Functionally, probably deamidates glutamine residues to glutamate on methyl-accepting chemotaxis receptors (MCPs), playing an important role in chemotaxis. The chain is Probable chemoreceptor glutamine deamidase CheD from Stenotrophomonas maltophilia (strain R551-3).